A 340-amino-acid chain; its full sequence is Nicotianamine synthase 9 (340 aa).

It belongs to the nicotianamine synthase (NAS)-like family. In terms of assembly, homotrimer.

It carries out the reaction 3 S-adenosyl-L-methionine = nicotianamine + 3 S-methyl-5'-thioadenosine + 3 H(+). Functionally, synthesizes nicotianamine, a polyamine that is the first intermediate in the synthesis of the phytosiderophores of the mugineic acid type found in gramineae which serves as a sensor for the physiological iron status within the plant, and/or might be involved in the transport of iron. The polypeptide is Nicotianamine synthase 9 (NAS9) (Hordeum vulgare (Barley)).